The sequence spans 477 residues: Cysteine protease ATG4b (477 aa).

Residues 11–39 (SKCSSSSTSEKRDISSPTSLVSDSASSDN) are disordered. Over residues 25-39 (SSPTSLVSDSASSDN) the composition is skewed to polar residues. Cys-173 acts as the Nucleophile in catalysis. Active-site residues include Asp-368 and His-370. The interval 453-477 (AETSSSTETSTEISGEEHEDDWQLL) is disordered. A compositionally biased stretch (low complexity) spans 454-465 (ETSSSTETSTEI).

It belongs to the peptidase C54 family. As to quaternary structure, interacts with ATG8a and ATG8d. As to expression, constitutively expressed.

It localises to the cytoplasm. The catalysed reaction is [protein]-C-terminal L-amino acid-glycyl-phosphatidylethanolamide + H2O = [protein]-C-terminal L-amino acid-glycine + a 1,2-diacyl-sn-glycero-3-phosphoethanolamine. Its function is as follows. Cysteine protease that plays a key role in autophagy by mediating both proteolytic activation and delipidation of ATG8 family proteins. The protease activity is required for proteolytic activation of ATG8 family proteins: cleaves the C-terminal amino acid of ATG8 proteins to reveal a C-terminal glycine. Exposure of the glycine at the C-terminus is essential for ATG8 proteins conjugation to phosphatidylethanolamine (PE) and insertion to membranes, which is necessary for autophagy. In addition to the protease activity, also mediates delipidation of PE-conjugated ATG8 proteins. This chain is Cysteine protease ATG4b, found in Arabidopsis thaliana (Mouse-ear cress).